The following is a 67-amino-acid chain: Probable Sec-independent protein translocase protein TatE (67 aa).

A helical transmembrane segment spans residues 4 to 21 (ISITKLLVVAALIVLVFG). Residues 43–67 (MNDDDTSVKKSAEEDVPADKISHKE) are disordered.

Belongs to the TatA/E family. TatE subfamily.

The protein resides in the cell inner membrane. Part of the twin-arginine translocation (Tat) system that transports large folded proteins containing a characteristic twin-arginine motif in their signal peptide across membranes. TatE shares overlapping functions with TatA. The polypeptide is Probable Sec-independent protein translocase protein TatE (Enterobacter lignolyticus (strain SCF1)).